We begin with the raw amino-acid sequence, 92 residues long: MTRSIKKNPFVANHLLVKIEKLNMRQEKEIIVTWSRASTIIPTMIGHTIAIHNGKEHLPIYITDRMVGHKLGEFAPTRSFGKHARNDIKSRR.

The protein belongs to the universal ribosomal protein uS19 family.

The protein localises to the plastid. The protein resides in the chloroplast. Its function is as follows. Protein S19 forms a complex with S13 that binds strongly to the 16S ribosomal RNA. The protein is Small ribosomal subunit protein uS19c of Lemna minor (Common duckweed).